A 208-amino-acid polypeptide reads, in one-letter code: ATP synthase subunit beta, chloroplastic (208 aa).

This sequence belongs to the ATPase alpha/beta chains family. In terms of assembly, F-type ATPases have 2 components, CF(1) - the catalytic core - and CF(0) - the membrane proton channel. CF(1) has five subunits: alpha(3), beta(3), gamma(1), delta(1), epsilon(1). CF(0) has four main subunits: a(1), b(1), b'(1) and c(9-12).

The protein resides in the plastid. The protein localises to the chloroplast thylakoid membrane. The enzyme catalyses ATP + H2O + 4 H(+)(in) = ADP + phosphate + 5 H(+)(out). Functionally, produces ATP from ADP in the presence of a proton gradient across the membrane. The catalytic sites are hosted primarily by the beta subunits. This Lonchitis hirsuta (Tomato fern) protein is ATP synthase subunit beta, chloroplastic (atpB).